The chain runs to 425 residues: Orexin/Hypocretin receptor type 1 (425 aa).

The segment at 1–25 is disordered; that stretch reads MEPSATPGPQMGVPTEGRERSPEPP. The Extracellular portion of the chain corresponds to 1-46; sequence MEPSATPGPQMGVPTEGRERSPEPPDYEDEFLRYLWRDYLYPKQYE. Positions 26–41 are required for response to orexin-A; that stretch reads DYEDEFLRYLWRDYLY. The chain crosses the membrane as a helical span at residues 47-67; the sequence is WVLIAAYVAVFFVALVGNTLV. The Cytoplasmic portion of the chain corresponds to 68-82; the sequence is CLAVWRNHHMRTVTN. A helical transmembrane segment spans residues 83–105; the sequence is YFIVNLSLADVLVTAICLPASLL. The Extracellular segment spans residues 106–119; that stretch reads VDITESWLFGHALC. A disulfide bridge links C119 with C202. Residues 120–140 form a helical membrane-spanning segment; sequence KVIPYLQAVSVSVAVLTLSFI. Topologically, residues 141–160 are cytoplasmic; the sequence is ALDRWYAICHPLLFKSTARR. The helical transmembrane segment at 161–182 threads the bilayer; sequence ARGSILGIWAVSLAVMVPQAAV. The Extracellular portion of the chain corresponds to 183–213; it reads MECSSVLPELANRTRLFSVCDERWADDLYPK. N194 carries N-linked (GlcNAc...) asparagine glycosylation. A helical membrane pass occupies residues 214-235; sequence IYHSCFFIVTYLAPLGLMAMAY. The Cytoplasmic segment spans residues 236–298; sequence FQIFRKLWGR…QMRARRKTAK (63 aa). Residues 299 to 321 traverse the membrane as a helical segment; it reads MLMVVLLVFALCYLPISVLNVLK. Residues 322–336 are Extracellular-facing; that stretch reads RVFGMFRQASDREAV. Residues 337–360 form a helical membrane-spanning segment; that stretch reads YACFTFSHWLVYANSAANPIIYNF. Over 361–425 the chain is Cytoplasmic; the sequence is LSGKFREQFK…LLTSVTTVLP (65 aa).

It belongs to the G-protein coupled receptor 1 family.

The protein resides in the cell membrane. Its function is as follows. Moderately selective excitatory receptor for orexin-A and, with a lower affinity, for orexin-B neuropeptide. Triggers an increase in cytoplasmic Ca(2+) levels in response to orexin-A binding. The protein is Orexin/Hypocretin receptor type 1 of Bos taurus (Bovine).